A 479-amino-acid chain; its full sequence is UDP-N-acetylmuramate--L-alanine ligase (479 aa).

115 to 121 (GTHGKTT) contacts ATP.

The protein belongs to the MurCDEF family.

It localises to the cytoplasm. It catalyses the reaction UDP-N-acetyl-alpha-D-muramate + L-alanine + ATP = UDP-N-acetyl-alpha-D-muramoyl-L-alanine + ADP + phosphate + H(+). The protein operates within cell wall biogenesis; peptidoglycan biosynthesis. Functionally, cell wall formation. The protein is UDP-N-acetylmuramate--L-alanine ligase of Acidiphilium cryptum (strain JF-5).